The sequence spans 178 residues: MRAYYFDNIPGDQRLPHDSGRPVSEDTLRKLNISYWRIELDGYLPKLNAVAEERGYKNRDFINVSKAGLGDSYEEKLKNFFSEHMHEDEEIRYVVDGSGFFDVRESPSDEWIRIGVEPGDLLVIPAGIYHRFTLDENNYIKAIRLFQDEPKWIPYNRSEETEVNPHRINYLREIGVGA.

Fe(2+)-binding residues include His-84, His-86, Glu-90, and His-130. His-84, His-86, Glu-90, and His-130 together coordinate Ni(2+).

Belongs to the acireductone dioxygenase (ARD) family. It depends on Fe(2+) as a cofactor. The cofactor is Ni(2+).

The protein resides in the cytoplasm. It localises to the nucleus. It carries out the reaction 1,2-dihydroxy-5-(methylsulfanyl)pent-1-en-3-one + O2 = 4-methylsulfanyl-2-oxobutanoate + formate + 2 H(+). The catalysed reaction is 1,2-dihydroxy-5-(methylsulfanyl)pent-1-en-3-one + O2 = 3-(methylsulfanyl)propanoate + CO + formate + 2 H(+). The protein operates within amino-acid biosynthesis; L-methionine biosynthesis via salvage pathway; L-methionine from S-methyl-5-thio-alpha-D-ribose 1-phosphate: step 5/6. In terms of biological role, catalyzes 2 different reactions between oxygen and the acireductone 1,2-dihydroxy-3-keto-5-methylthiopentene (DHK-MTPene) depending upon the metal bound in the active site. Fe-containing acireductone dioxygenase (Fe-ARD) produces formate and 2-keto-4-methylthiobutyrate (KMTB), the alpha-ketoacid precursor of methionine in the methionine recycle pathway. Ni-containing acireductone dioxygenase (Ni-ARD) produces methylthiopropionate, carbon monoxide and formate, and does not lie on the methionine recycle pathway. The chain is Acireductone dioxygenase 1 from Coprinopsis cinerea (strain Okayama-7 / 130 / ATCC MYA-4618 / FGSC 9003) (Inky cap fungus).